The primary structure comprises 300 residues: MDWFHCNQCFRKDGAHFFVTSCGHIFCKKCVTLEKCAVCGTACKHLALSDNLKPQEKMFFKSPVETALQYFSHISQVWSFQKKQTDLLIAFYKHRITKLETAMQEAQQALVSQDKELSVLRKENGELKKFLAILKESPSRYQGSRSITPRPVGITSPSQSVTPRPSFQHSSQVVSRSSSAESIPYREAGFGSLGQGGRGLQGRRTPRDSYNETPSPASTHSLSYRTSSASSGQGIFSFRPSPNGHSGHTRVLTPNNFAQRESTTTLESLPSFQLPVLQTLYQQRRHMGLPSGREAWTTSR.

The segment at 6–40 adopts an RING-type zinc-finger fold; that stretch reads CNQCFRKDGAHFFVTSCGHIFCKKCVTLEKCAVCG. Residues 87–124 adopt a coiled-coil conformation; the sequence is LLIAFYKHRITKLETAMQEAQQALVSQDKELSVLRKEN. Positions 141-232 are disordered; sequence YQGSRSITPR…SYRTSSASSG (92 aa). Positions 155–165 are enriched in polar residues; that stretch reads TSPSQSVTPRP. Over residues 166–182 the composition is skewed to low complexity; it reads SFQHSSQVVSRSSSAES. A compositionally biased stretch (gly residues) spans 191 to 200; that stretch reads GSLGQGGRGL. Positions 211 to 232 are enriched in polar residues; sequence NETPSPASTHSLSYRTSSASSG.

As to quaternary structure, homodimer. Post-translationally, autoubiquitinated.

It localises to the chromosome. The catalysed reaction is S-ubiquitinyl-[E2 ubiquitin-conjugating enzyme]-L-cysteine + [acceptor protein]-L-lysine = [E2 ubiquitin-conjugating enzyme]-L-cysteine + N(6)-ubiquitinyl-[acceptor protein]-L-lysine.. It functions in the pathway protein modification; protein ubiquitination. Functionally, ubiquitin E3 ligase that acts as a crucial factor for crossing-over (CO) formation during meiosis. Essential for normal prophase I progression and for ensuring appropriate CO designation in meiosis. Recruits key components of the cross-over machinery either directly ou indirectly, leading to the activation of the MutL-gamma complex. The function of RNF212B in CO designation is dependent on its catalytic activity. The sequence is that of E3 ubiquitin-protein ligase RNF212B (RNF212B) from Homo sapiens (Human).